The sequence spans 260 residues: 3'-5' ssDNA/RNA exonuclease TatD (260 aa).

A divalent metal cation-binding residues include Glu-92, His-128, and His-153.

It belongs to the metallo-dependent hydrolases superfamily. TatD-type hydrolase family. TatD subfamily. As to quaternary structure, monomer. Mg(2+) serves as cofactor.

It localises to the cytoplasm. 3'-5' exonuclease that prefers single-stranded DNA and RNA. May play a role in the H(2)O(2)-induced DNA damage repair. The chain is 3'-5' ssDNA/RNA exonuclease TatD from Edwardsiella piscicida.